A 144-amino-acid polypeptide reads, in one-letter code: uncharacterized protein (144 aa).

An HIT domain is found at 4 to 111; that stretch reads VFCAIIAGEA…LPPRNGDKLS (108 aa). The Histidine triad motif motif lies at 96–100; it reads HVHLH.

This is an uncharacterized protein from Mycobacterium tuberculosis (strain CDC 1551 / Oshkosh).